The sequence spans 930 residues: Nonribosomal peptide synthetase acyN (930 aa).

The tract at residues 15–436 (LDPQDNKISV…AGRAKETIIV (422 aa)) is adenylation (A) domain. Residues 567-646 (APSNETEATI…GLAGTLETLM (80 aa)) form the Carrier domain. Position 604 is an O-(pantetheine 4'-phosphoryl)serine (S604). The thioesterase (TE) domain stretch occupies residues 665–914 (PLWLVHPGVG…HYTMLGPDNI (250 aa)).

Belongs to the NRP synthetase family.

The enzyme catalyses 2 3-phenylpyruvate + 2 ATP = polyporic acid + 2 AMP + 2 diphosphate + H(+). It participates in secondary metabolite biosynthesis. With respect to regulation, hydroxyphenylpyruvate acts more like a competitive inhibitor rather than a substrate. In terms of biological role, nonribosomal peptide synthetase that mediates the biosynthesis of polyporic acid via the condensation of 2 phenylpyruvate units. Polyporic acid is further hydroxylaed by the cytochrome P450 monooxygenase MO6277 into less toxic ascocorynin. This Ascocoryne sarcoides (Purple jellydisc fungus) protein is Nonribosomal peptide synthetase acyN.